Reading from the N-terminus, the 258-residue chain is Indole-3-glycerol phosphate synthase (258 aa).

The protein belongs to the TrpC family.

The enzyme catalyses 1-(2-carboxyphenylamino)-1-deoxy-D-ribulose 5-phosphate + H(+) = (1S,2R)-1-C-(indol-3-yl)glycerol 3-phosphate + CO2 + H2O. The protein operates within amino-acid biosynthesis; L-tryptophan biosynthesis; L-tryptophan from chorismate: step 4/5. This chain is Indole-3-glycerol phosphate synthase, found in Chlorobium phaeobacteroides (strain DSM 266 / SMG 266 / 2430).